A 415-amino-acid chain; its full sequence is Putative glutamate--cysteine ligase 2 (415 aa).

It belongs to the glutamate--cysteine ligase type 2 family. YbdK subfamily.

It catalyses the reaction L-cysteine + L-glutamate + ATP = gamma-L-glutamyl-L-cysteine + ADP + phosphate + H(+). ATP-dependent carboxylate-amine ligase which exhibits weak glutamate--cysteine ligase activity. This Bordetella petrii (strain ATCC BAA-461 / DSM 12804 / CCUG 43448) protein is Putative glutamate--cysteine ligase 2.